The following is a 557-amino-acid chain: 2-succinyl-5-enolpyruvyl-6-hydroxy-3-cyclohexene-1-carboxylate synthase (557 aa).

A disordered region spans residues 183 to 206 (YGGTEHPPVAPPLPPRRAPRAAAP).

The protein belongs to the TPP enzyme family. MenD subfamily. Homodimer. Requires Mg(2+) as cofactor. Mn(2+) serves as cofactor. Thiamine diphosphate is required as a cofactor.

It catalyses the reaction isochorismate + 2-oxoglutarate + H(+) = 5-enolpyruvoyl-6-hydroxy-2-succinyl-cyclohex-3-ene-1-carboxylate + CO2. The protein operates within quinol/quinone metabolism; 1,4-dihydroxy-2-naphthoate biosynthesis; 1,4-dihydroxy-2-naphthoate from chorismate: step 2/7. It functions in the pathway quinol/quinone metabolism; menaquinone biosynthesis. In terms of biological role, catalyzes the thiamine diphosphate-dependent decarboxylation of 2-oxoglutarate and the subsequent addition of the resulting succinic semialdehyde-thiamine pyrophosphate anion to isochorismate to yield 2-succinyl-5-enolpyruvyl-6-hydroxy-3-cyclohexene-1-carboxylate (SEPHCHC). The protein is 2-succinyl-5-enolpyruvyl-6-hydroxy-3-cyclohexene-1-carboxylate synthase of Halorhodospira halophila (strain DSM 244 / SL1) (Ectothiorhodospira halophila (strain DSM 244 / SL1)).